The primary structure comprises 292 residues: Probable serine/threonine-protein kinase FPV226 (292 aa).

Residues 14-292 enclose the Protein kinase domain; sequence WKIDKLIGCG…DLLRQLVNSL (279 aa). ATP is bound by residues 20–28 and lysine 43; that span reads IGCGGFGCV. The Proton acceptor role is filled by aspartate 147.

Belongs to the protein kinase superfamily. Ser/Thr protein kinase family. Poxviruses subfamily.

The catalysed reaction is L-seryl-[protein] + ATP = O-phospho-L-seryl-[protein] + ADP + H(+). It carries out the reaction L-threonyl-[protein] + ATP = O-phospho-L-threonyl-[protein] + ADP + H(+). The chain is Probable serine/threonine-protein kinase FPV226 from Vertebrata (FPV).